Consider the following 96-residue polypeptide: C-C motif chemokine 20 (96 aa).

Residues 1–26 (MCCTKSLLLAALMSVLLLHLCGESEA) form the signal peptide. 2 disulfides stabilise this stretch: cysteine 32–cysteine 58 and cysteine 33–cysteine 74.

This sequence belongs to the intercrine beta (chemokine CC) family. Post-translationally, C-terminal processed forms which lack 1, 3 or 6 amino acids are produced by proteolytic cleavage after secretion from peripheral blood monocytes. As to expression, expressed in the seminal plasma, endometrial fluid and follicular fluid (at protein level). Expressed predominantly in the liver, lymph nodes, appendix, peripheral blood lymphocytes, and fetal lung. Low levels seen in thymus, prostate, testis, small intestine and colon.

The protein resides in the secreted. Its function is as follows. Acts as a ligand for C-C chemokine receptor CCR6. Signals through binding and activation of CCR6 and induces a strong chemotactic response and mobilization of intracellular calcium ions. The ligand-receptor pair CCL20-CCR6 is responsible for the chemotaxis of dendritic cells (DC), effector/memory T-cells and B-cells and plays an important role at skin and mucosal surfaces under homeostatic and inflammatory conditions, as well as in pathology, including cancer and various autoimmune diseases. CCL20 acts as a chemotactic factor that attracts lymphocytes and, slightly, neutrophils, but not monocytes. Involved in the recruitment of both the pro-inflammatory IL17 producing helper T-cells (Th17) and the regulatory T-cells (Treg) to sites of inflammation. Required for optimal migration of thymic natural regulatory T cells (nTregs) and DN1 early thymocyte progenitor cells. C-terminal processed forms have been shown to be equally chemotactically active for leukocytes. Positively regulates sperm motility and chemotaxis via its binding to CCR6 which triggers Ca2+ mobilization in the sperm which is important for its motility. Inhibits proliferation of myeloid progenitors in colony formation assays. May be involved in formation and function of the mucosal lymphoid tissues by attracting lymphocytes and dendritic cells towards epithelial cells. Possesses antibacterial activity towards E.coli ATCC 25922 and S.aureus ATCC 29213. This is C-C motif chemokine 20 (CCL20) from Homo sapiens (Human).